The sequence spans 139 residues: Large ribosomal subunit protein uL22 (139 aa).

Residues valine 118–arginine 139 form a disordered region. Residues lysine 125 to arginine 139 show a composition bias toward basic residues.

The protein belongs to the universal ribosomal protein uL22 family. As to quaternary structure, part of the 50S ribosomal subunit.

This protein binds specifically to 23S rRNA; its binding is stimulated by other ribosomal proteins, e.g. L4, L17, and L20. It is important during the early stages of 50S assembly. It makes multiple contacts with different domains of the 23S rRNA in the assembled 50S subunit and ribosome. Functionally, the globular domain of the protein is located near the polypeptide exit tunnel on the outside of the subunit, while an extended beta-hairpin is found that lines the wall of the exit tunnel in the center of the 70S ribosome. The polypeptide is Large ribosomal subunit protein uL22 (Saccharopolyspora erythraea (strain ATCC 11635 / DSM 40517 / JCM 4748 / NBRC 13426 / NCIMB 8594 / NRRL 2338)).